Consider the following 977-residue polypeptide: uncharacterized protein (977 aa).

The disordered stretch occupies residues 100-152 (ATSPLQQNGKSRDTEKPPSMKEKDLSSNSSSQHDKAFHERVDQGKNKSSTTKY). 2 stretches are compositionally biased toward basic and acidic residues: residues 109–124 (KSRDTEKPPSMKEKDL) and 131–144 (QHDKAFHERVDQGK). At Ser165 the chain carries Phosphoserine. 2 stretches are compositionally biased toward polar residues: residues 166–175 (PGQSVNSLKP) and 183–193 (STKSSTSSEMH). The segment at 166 to 194 (PGQSVNSLKPNSGDEVPSTKSSTSSEMHT) is disordered.

This is an uncharacterized protein from Schizosaccharomyces pombe (strain 972 / ATCC 24843) (Fission yeast).